Consider the following 372-residue polypeptide: Probable L-tyrosine/L-aspartate decarboxylase (372 aa).

Position 215 is an N6-(pyridoxal phosphate)lysine (Lys-215).

Belongs to the group II decarboxylase family. MfnA subfamily. Pyridoxal 5'-phosphate is required as a cofactor.

It catalyses the reaction L-tyrosine + H(+) = tyramine + CO2. The enzyme catalyses L-aspartate + H(+) = beta-alanine + CO2. The protein operates within cofactor biosynthesis; methanofuran biosynthesis. It participates in cofactor biosynthesis; coenzyme A biosynthesis. Its function is as follows. Catalyzes the decarboxylation of L-tyrosine to produce tyramine for methanofuran biosynthesis. Can also catalyze the decarboxylation of L-aspartate to produce beta-alanine for coenzyme A (CoA) biosynthesis. The protein is Probable L-tyrosine/L-aspartate decarboxylase of Methanopyrus kandleri (strain AV19 / DSM 6324 / JCM 9639 / NBRC 100938).